The primary structure comprises 1132 residues: Protein sel-1 homolog 3 (1132 aa).

The interval 1 to 24 is disordered; it reads MQRRGAGLGWPRQQQQQPPPLAVG. N-linked (GlcNAc...) asparagine glycans are attached at residues asparagine 201, asparagine 382, and asparagine 527. Sel1-like repeat units follow at residues 575–609, 611–647, 694–730, 732–767, 768–800, 801–839, and 840–877; these read YLAVFYETGLNVPRDQLQGMLYSLVGGQGSERLSS, NLGYKHYQGIDNYPLDWELSYAYYSNIATKTPLDQHT, RLAQMLFWGQQGVAKNPEAAIEWYAKGALETEDPALI, DYAIVLFKGQGVKKNRRLALELMKKAASKGLHQAVN, GLGWYYHKFKKNYAKAAKYWLKAEEMGNPDASY, NLGVLHLDGIFPGVPGRNQTLAGEYFHKAAQGGHMEGTL, and WCSLYYITGNLETFPRDPEKAVVWAKHVAEKNGYLGHV. Serine 608 is modified (phosphoserine). Residue asparagine 937 is glycosylated (N-linked (GlcNAc...) asparagine). The stretch at 952–988 is one Sel1-like 8 repeat; sequence KMGDLYYYGHQNQSQDLELSVQMYAQAALDGDSQGFF. A helical transmembrane segment spans residues 1057–1077; sequence ILHSALIYFLGTFLLSILIAW. The tract at residues 1087-1132 is disordered; it reads ASDPPPRPSQASPDTATSTASPAVTPAADASDQDQPTVTNNPEPRG. Over residues 1097-1116 the composition is skewed to low complexity; sequence ASPDTATSTASPAVTPAADA. Residues 1119-1132 are compositionally biased toward polar residues; sequence QDQPTVTNNPEPRG.

Its subcellular location is the membrane. This Homo sapiens (Human) protein is Protein sel-1 homolog 3 (SEL1L3).